The primary structure comprises 167 residues: Large ribosomal subunit protein uL10 (167 aa).

Belongs to the universal ribosomal protein uL10 family. Part of the ribosomal stalk of the 50S ribosomal subunit. The N-terminus interacts with L11 and the large rRNA to form the base of the stalk. The C-terminus forms an elongated spine to which L12 dimers bind in a sequential fashion forming a multimeric L10(L12)X complex.

In terms of biological role, forms part of the ribosomal stalk, playing a central role in the interaction of the ribosome with GTP-bound translation factors. The polypeptide is Large ribosomal subunit protein uL10 (Paraburkholderia phytofirmans (strain DSM 17436 / LMG 22146 / PsJN) (Burkholderia phytofirmans)).